Reading from the N-terminus, the 287-residue chain is Inorganic pyrophosphatase (287 aa).

Arginine 79 is a diphosphate binding site. Mg(2+) is bound by residues aspartate 116, aspartate 121, and aspartate 153. The segment covering 244-258 (NSTLGNSDSVDSSKL) has biased composition (polar residues). A disordered region spans residues 244 to 269 (NSTLGNSDSVDSSKLASIPRGENLPP).

The protein belongs to the PPase family. Mg(2+) serves as cofactor.

It is found in the cytoplasm. The catalysed reaction is diphosphate + H2O = 2 phosphate + H(+). In terms of biological role, involved in osmoadaptation. The sequence is that of Inorganic pyrophosphatase (ipp1) from Emericella nidulans (strain FGSC A4 / ATCC 38163 / CBS 112.46 / NRRL 194 / M139) (Aspergillus nidulans).